A 393-amino-acid chain; its full sequence is NAD(P)H-quinone oxidoreductase subunit H, chloroplastic (393 aa).

This sequence belongs to the complex I 49 kDa subunit family. NDH is composed of at least 16 different subunits, 5 of which are encoded in the nucleus.

It localises to the plastid. Its subcellular location is the chloroplast thylakoid membrane. It catalyses the reaction a plastoquinone + NADH + (n+1) H(+)(in) = a plastoquinol + NAD(+) + n H(+)(out). The enzyme catalyses a plastoquinone + NADPH + (n+1) H(+)(in) = a plastoquinol + NADP(+) + n H(+)(out). Functionally, NDH shuttles electrons from NAD(P)H:plastoquinone, via FMN and iron-sulfur (Fe-S) centers, to quinones in the photosynthetic chain and possibly in a chloroplast respiratory chain. The immediate electron acceptor for the enzyme in this species is believed to be plastoquinone. Couples the redox reaction to proton translocation, and thus conserves the redox energy in a proton gradient. The chain is NAD(P)H-quinone oxidoreductase subunit H, chloroplastic from Sorghum bicolor (Sorghum).